We begin with the raw amino-acid sequence, 161 residues long: Phosphopantetheine adenylyltransferase (161 aa).

Residue S9 coordinates substrate. Residues 9 to 10 (SF) and H17 contribute to the ATP site. Substrate-binding residues include K41, T73, and R87. ATP contacts are provided by residues 88–90 (GLR), E98, and 123–129 (FAHISST).

It belongs to the bacterial CoaD family. Homohexamer. Mg(2+) serves as cofactor.

The protein resides in the cytoplasm. The catalysed reaction is (R)-4'-phosphopantetheine + ATP + H(+) = 3'-dephospho-CoA + diphosphate. Its pathway is cofactor biosynthesis; coenzyme A biosynthesis; CoA from (R)-pantothenate: step 4/5. In terms of biological role, reversibly transfers an adenylyl group from ATP to 4'-phosphopantetheine, yielding dephospho-CoA (dPCoA) and pyrophosphate. The protein is Phosphopantetheine adenylyltransferase of Chloroflexus aurantiacus (strain ATCC 29366 / DSM 635 / J-10-fl).